A 104-amino-acid polypeptide reads, in one-letter code: Ig kappa chain V region XP-1 (104 aa).

The tract at residues 1–24 (ADIVMTQTPASVSEPVGGTVTIKC) is framework-1. Residues 25–35 (QASQSIFBBLA) are complementarity-determining-1. Positions 36–49 (WYQKPGZPPKGLLY) are framework-2. The segment at 50–56 (TBYTLAS) is complementarity-determining-2. Residues 57–88 (GVSSRFSGGGSGTBFTLTISDLECABAATYYC) form a framework-3 region. Positions 89 to 100 (EXTGVSZBXBKG) are complementarity-determining-3. A framework-4 region spans residues 101–104 (FGGG).

The polypeptide is Ig kappa chain V region XP-1 (Oryctolagus cuniculus (Rabbit)).